We begin with the raw amino-acid sequence, 25 residues long: Alpha-amylase inhibitor (25 aa).

In terms of assembly, monomer or homodimer. May exist both in a glycosylated and in an unglycosylated form.

Its subcellular location is the secreted. Functionally, inhibits alpha-amylases but not trypsin. Is more effective against insect alpha-amylases than those of mammals. This chain is Alpha-amylase inhibitor, found in Secale cereale (Rye).